The primary structure comprises 298 residues: Protoheme IX farnesyltransferase (298 aa).

The next 8 helical transmembrane spans lie at 16 to 36 (VVAL…PGMP), 45 to 65 (ALGF…NQLL), 97 to 117 (VLIV…TAVL), 141 to 161 (IVIG…AVTG), 172 to 192 (SLLV…LAIF), 223 to 243 (VLLA…VFYL), 244 to 264 (GGAV…LDPP), and 277 to 297 (VVYL…LPWV).

This sequence belongs to the UbiA prenyltransferase family. Protoheme IX farnesyltransferase subfamily.

The protein localises to the cell inner membrane. The enzyme catalyses heme b + (2E,6E)-farnesyl diphosphate + H2O = Fe(II)-heme o + diphosphate. It participates in porphyrin-containing compound metabolism; heme O biosynthesis; heme O from protoheme: step 1/1. Functionally, converts heme B (protoheme IX) to heme O by substitution of the vinyl group on carbon 2 of heme B porphyrin ring with a hydroxyethyl farnesyl side group. This is Protoheme IX farnesyltransferase from Xanthomonas campestris pv. campestris (strain 8004).